The chain runs to 281 residues: Endochitinase At2g43610 (281 aa).

A signal peptide spans 1–28 (MATQNAILKKALIIFLFTLTIMTGTAFS). Residues 29–66 (QNCGTNGCKGNMCCSRWGYCGTTKAYCGTGCQSGPCNS) enclose the Chitin-binding type-1 domain. Disulfide bonds link Cys-31/Cys-42, Cys-36/Cys-48, Cys-41/Cys-55, and Cys-59/Cys-64. Residues 86–281 (GTIASVITPA…GVTPGTNLSC (196 aa)) are catalytic. The active-site Proton donor is the Glu-148. Asn-278 carries an N-linked (GlcNAc...) asparagine glycan.

Belongs to the glycosyl hydrolase 19 family. Chitinase class I subfamily.

The enzyme catalyses Random endo-hydrolysis of N-acetyl-beta-D-glucosaminide (1-&gt;4)-beta-linkages in chitin and chitodextrins.. In Arabidopsis thaliana (Mouse-ear cress), this protein is Endochitinase At2g43610.